Consider the following 597-residue polypeptide: Aspartate--tRNA ligase (597 aa).

E180 is a binding site for L-aspartate. An aspartate region spans residues 204-207; the sequence is QLFK. R226 is a binding site for L-aspartate. ATP is bound by residues 226 to 228 and Q235; that span reads RDE. H454 lines the L-aspartate pocket. E488 lines the ATP pocket. R495 serves as a coordination point for L-aspartate. An ATP-binding site is contributed by 540 to 543; it reads GLDR.

Belongs to the class-II aminoacyl-tRNA synthetase family. Type 1 subfamily. In terms of assembly, homodimer.

It localises to the cytoplasm. The catalysed reaction is tRNA(Asp) + L-aspartate + ATP = L-aspartyl-tRNA(Asp) + AMP + diphosphate. Its function is as follows. Catalyzes the attachment of L-aspartate to tRNA(Asp) in a two-step reaction: L-aspartate is first activated by ATP to form Asp-AMP and then transferred to the acceptor end of tRNA(Asp). In Clostridium perfringens (strain ATCC 13124 / DSM 756 / JCM 1290 / NCIMB 6125 / NCTC 8237 / Type A), this protein is Aspartate--tRNA ligase.